The chain runs to 493 residues: GTPase Der (493 aa).

An EngA-type G 1 domain is found at 3-166 (PVIALVGRPN…EALGIFPKDN (164 aa)). GTP is bound by residues 9–16 (GRPNVGKS), 56–60 (DTGGI), and 118–121 (NKVD). The tract at residues 166–195 (NAEEEGEGEPASEEVAEGEEPTRIPGPSEK) is disordered. Positions 167–184 (AEEEGEGEPASEEVAEGE) are enriched in acidic residues. An EngA-type G 2 domain is found at 198–371 (IKIAIIGRPN…SVQESFRSAV (174 aa)). Residues 204-211 (GRPNVGKS), 251-255 (DTAGV), and 316-319 (NKWD) each bind GTP. Residues 372–456 (TRWPTSRLTS…PIRIEYKGGE (85 aa)) enclose the KH-like domain. Residues 454–463 (GGENPYEGKK) are compositionally biased toward basic and acidic residues. A disordered region spans residues 454-493 (GGENPYEGKKNSLTARQVNKKRRLMSHHKKAEKKKKDKRR). The span at 471-493 (VNKKRRLMSHHKKAEKKKKDKRR) shows a compositional bias: basic residues.

Belongs to the TRAFAC class TrmE-Era-EngA-EngB-Septin-like GTPase superfamily. EngA (Der) GTPase family. As to quaternary structure, associates with the 50S ribosomal subunit.

Its function is as follows. GTPase that plays an essential role in the late steps of ribosome biogenesis. The chain is GTPase Der from Pseudomonas aeruginosa (strain UCBPP-PA14).